A 436-amino-acid chain; its full sequence is FAD-dependent monooxygenase pigN (436 aa).

Residues Glu-40, Gly-53, and Arg-118 each contribute to the FAD site. Residue Arg-200 is part of the active site. 2 residues coordinate FAD: Asp-316 and Ala-329.

This sequence belongs to the paxM FAD-dependent monooxygenase family. FAD is required as a cofactor.

It functions in the pathway secondary metabolite biosynthesis. FAD-dependent monooxygenase; part of the gene cluster that mediates the biosynthesis of azaphilone pigments (MonAzPs), a complex mixture of compounds with a common azaphilone skeleton very widely used as food colorants. Within the pathway, pigN hydroxylates the benzaldehyde M7PKS-1 intermediate at C-4 to form the pyran ring. The first step of the pathway is performed by the nrPKS pigA that forms the hexaketide precursor from successive condensations of five malonyl-CoA units, with a simple acetyl-CoA starter unit. The role of esterase pigG is not clear, but it may play at most a supplementary role in the formation of the benzaldehyde produced by the pigA nrPKS. This very reactive benzaldehyde is intercepted by the pigC ketoreductase that to provide the first stable enzyme-free MonAzPs intermediate, 6-(4-hydroxy-2-oxopentyl)-3-methyl-2,4-dioxocyclohexane carbaldehyde, also known as M7PKS-1. The FAD-dependent monooxygenase pigN hydroxylates M7PKS-1 at C-4, which triggers the formation of the pyran ring. PigJ, pigK and pigD are involved in the acetylation of the pyran ring. PigJ and pigK form the two subunits of a dedicated fungal FAS that produces the side chain fatty acyl moiety of MonAzPs and pigD transfers the fatty acyl chain to the C-4 alcohol. PigM and pigO are involved in the elimination of the omega-1 alcohol. PigM acts as an O-acetyltransferase that synthesizes the putative O-11 acetyl intermediate whereas pigO eliminates acetic acid to yield an intermediate with a C10(11) double bond. The dehydration of the C-11 alcohol followed by the reduction of the C6(7) double bond by the NAD(P)H-dependent oxidoreductase pigE increases the electrophilicity of the C-5 ketone of the resulting acyl benzopyran. This in turn sets up the C-5 ketone for an intramolecular Knoevenagel aldol condensation with the C-20 enol of the side chain. This condensation affords the characteristic linear tricyclic carbon skeletons of the yellow pigments that serve as the common precursors for the classical yellow pigments monascin and ankaflavin, orange pigments rubopunctatin and monascorubrin, and red pigments ribropunctamine and monascorubramine. The FAD-dependent oxidoreductase pigF is especially invoved in the biosynthesis of orange and red pigments via desaturation of C6(7). The polypeptide is FAD-dependent monooxygenase pigN (Monascus ruber (Mold)).